Consider the following 541-residue polypeptide: Exopolysaccharide phosphotransferase SCO6021 (541 aa).

Belongs to the stealth family.

The sequence is that of Exopolysaccharide phosphotransferase SCO6021 from Streptomyces coelicolor (strain ATCC BAA-471 / A3(2) / M145).